Consider the following 367-residue polypeptide: Undecaprenyl-phosphate alpha-N-acetylglucosaminyl 1-phosphate transferase (367 aa).

The next 10 membrane-spanning stretches (helical) occupy residues 3-23, 46-66, 69-89, 132-152, 158-178, 187-207, 213-233, 242-262, 294-314, and 318-338; these read LLTV…FLFF, LIPL…FGIV, YIPH…IGAL, VLGP…INAF, IDGL…MILW, IWCF…LGIL, VFMG…ILLE, ISPV…VAIM, AFVL…LAEY, and VPEW…GYCI.

It belongs to the glycosyltransferase 4 family. WecA subfamily. Mg(2+) is required as a cofactor. Mn(2+) serves as cofactor.

It is found in the cell inner membrane. The enzyme catalyses di-trans,octa-cis-undecaprenyl phosphate + UDP-N-acetyl-alpha-D-glucosamine = N-acetyl-alpha-D-glucosaminyl-di-trans,octa-cis-undecaprenyl diphosphate + UMP. It participates in bacterial outer membrane biogenesis; LPS O-antigen biosynthesis. The protein operates within bacterial outer membrane biogenesis; enterobacterial common antigen biosynthesis. In terms of biological role, catalyzes the transfer of the GlcNAc-1-phosphate moiety from UDP-GlcNAc onto the carrier lipid undecaprenyl phosphate (C55-P), yielding GlcNAc-pyrophosphoryl-undecaprenyl (GlcNAc-PP-C55). This Escherichia coli O6:H1 (strain CFT073 / ATCC 700928 / UPEC) protein is Undecaprenyl-phosphate alpha-N-acetylglucosaminyl 1-phosphate transferase.